We begin with the raw amino-acid sequence, 325 residues long: Putative ankyrin repeat protein RF_0011 (325 aa).

ANK repeat units follow at residues 63-94 (NGNT…AINM), 99-130 (RGQP…NINA), and 134-164 (CGRT…EMII).

The sequence is that of Putative ankyrin repeat protein RF_0011 from Rickettsia felis (strain ATCC VR-1525 / URRWXCal2) (Rickettsia azadi).